Reading from the N-terminus, the 255-residue chain is Indole-3-glycerol phosphate synthase (255 aa).

The protein belongs to the TrpC family.

The enzyme catalyses 1-(2-carboxyphenylamino)-1-deoxy-D-ribulose 5-phosphate + H(+) = (1S,2R)-1-C-(indol-3-yl)glycerol 3-phosphate + CO2 + H2O. Its pathway is amino-acid biosynthesis; L-tryptophan biosynthesis; L-tryptophan from chorismate: step 4/5. The sequence is that of Indole-3-glycerol phosphate synthase from Streptococcus pneumoniae (strain Taiwan19F-14).